The sequence spans 506 residues: Maturase K (506 aa).

It belongs to the intron maturase 2 family. MatK subfamily.

Its subcellular location is the plastid. The protein localises to the chloroplast. Functionally, usually encoded in the trnK tRNA gene intron. Probably assists in splicing its own and other chloroplast group II introns. The protein is Maturase K of Empetrum nigrum (Black crowberry).